The chain runs to 1683 residues: ABC transporter 7 (1683 aa).

A helical transmembrane segment spans residues 24–44 (DYLRILLPAVVIGLSVLNLGF). Residues 53-93 (RSKSPSTHAYAPVSNGDNSRPGAHRTDISPDDDAIAQDDED) are disordered. The span at 81-93 (SPDDDAIAQDDED) shows a compositional bias: acidic residues. Helical transmembrane passes span 127-147 (LSVVVEELAIAGLVAVYVIAL), 157-177 (TLTGTIIGLTTWVYVLVLATL), 190-210 (HLWNHTAAIYSCQWLFLIGIF), and 221-241 (LAQILVIVEFALTSLLFFMAI). A glycan (N-linked (GlcNAc...) asparagine) is linked at asparagine 247. The next 2 membrane-spanning stretches (helical) occupy residues 336-356 (GWAVMSGMFTFAPTMLLKAIL) and 368-388 (SVVWLYVILLPVTDIIRSLGD). Residues 338-664 (AVMSGMFTFA…LGDMLAHVQE (327 aa)) form the ABC transmembrane type-1 1 domain. Residues 451 to 473 (GDNDESEDGKDGDKDKEDSSDEQ) form a disordered region. Asparagine 489 carries an N-linked (GlcNAc...) asparagine glycan. 2 helical membrane-spanning segments follow: residues 496-516 (YLHFLFASAPTQLLVSVVLLY) and 518-538 (VLGMSAIPGFVVMVLLLPVNI). N-linked (GlcNAc...) asparagine glycosylation is present at asparagine 545. 2 helical membrane-spanning segments follow: residues 602–622 (VWACAVAVWNTVPLLITFFSF) and 632–648 (PLHPSIAFTSISLFMLL). The 250-residue stretch at 700 to 949 (IALKDAAFIW…GALGEEIAQK (250 aa)) folds into the ABC transporter 1 domain. 742-749 (GPTGSGKT) is an ATP binding site. Residues 952–998 (SETPNISRIPSRVPSSVGEGSGNTLLDTDGDDHLSKPKNAKKAKKAE) form a disordered region. Asparagine 956 carries an N-linked (GlcNAc...) asparagine glycan. The chain crosses the membrane as a helical span at residues 1016-1036 (LYLASMGSWWFWVVAGCIFIS). Positions 1028–1351 (VVAGCIFISQ…NILWLVRLYS (324 aa)) constitute an ABC transmembrane type-1 2 domain. An N-linked (GlcNAc...) asparagine glycan is attached at asparagine 1097. 3 helical membrane-spanning segments follow: residues 1111–1131 (AQYYLVVLAIIGLAGSLTAFL), 1182–1202 (VDQEVAPIAIGILSCALGITV), and 1204–1224 (VVLIASITPGFLIAAVFITIA). An N-linked (GlcNAc...) asparagine glycan is attached at asparagine 1277. The next 2 helical transmembrane spans lie at 1304–1324 (LLGDFVSFFAGVFVILSIGVI) and 1327–1347 (GWAGISLSYAIGFAENILWLV). Positions 1392–1649 (VEFINYTTSY…GEGGSFKSMC (258 aa)) constitute an ABC transporter 2 domain. Residues asparagine 1396 and asparagine 1411 are each glycosylated (N-linked (GlcNAc...) asparagine). Position 1426 to 1433 (1426 to 1433 (GRTGAGKS)) interacts with ATP. 2 N-linked (GlcNAc...) asparagine glycosylation sites follow: asparagine 1541 and asparagine 1552.

This sequence belongs to the ABC transporter superfamily.

Its subcellular location is the membrane. ABC transporter; part of the gene cluster that mediates the biosynthesis of pyriculol and pyriculariol, two heptaketides that induce lesion formation upon application on rice leaves but are dispensable for pathogenicity. With the MFS transporter MFS1, is most likely responsible for pyriculol and pyriculariol secretion and thereby may contribute to intrinsic resistance. The protein is ABC transporter 7 of Pyricularia oryzae (strain 70-15 / ATCC MYA-4617 / FGSC 8958) (Rice blast fungus).